Reading from the N-terminus, the 480-residue chain is Glycogen synthase (480 aa).

Lys-15 is a binding site for ADP-alpha-D-glucose.

This sequence belongs to the glycosyltransferase 1 family. Bacterial/plant glycogen synthase subfamily.

It carries out the reaction [(1-&gt;4)-alpha-D-glucosyl](n) + ADP-alpha-D-glucose = [(1-&gt;4)-alpha-D-glucosyl](n+1) + ADP + H(+). It functions in the pathway glycan biosynthesis; glycogen biosynthesis. Functionally, synthesizes alpha-1,4-glucan chains using ADP-glucose. The protein is Glycogen synthase of Clostridioides difficile (strain 630) (Peptoclostridium difficile).